The sequence spans 430 residues: tRNA(Ile)-lysidine synthase (430 aa).

27 to 32 contributes to the ATP binding site; sequence SGGSDS.

The protein belongs to the tRNA(Ile)-lysidine synthase family.

The protein resides in the cytoplasm. The enzyme catalyses cytidine(34) in tRNA(Ile2) + L-lysine + ATP = lysidine(34) in tRNA(Ile2) + AMP + diphosphate + H(+). Functionally, ligates lysine onto the cytidine present at position 34 of the AUA codon-specific tRNA(Ile) that contains the anticodon CAU, in an ATP-dependent manner. Cytidine is converted to lysidine, thus changing the amino acid specificity of the tRNA from methionine to isoleucine. The chain is tRNA(Ile)-lysidine synthase from Rickettsia prowazekii (strain Madrid E).